The primary structure comprises 250 residues: Probable aquaporin TIP-type (250 aa).

The next 2 membrane-spanning stretches (helical) occupy residues 20–42 (AYVA…AIAY) and 55–77 (GLVA…AANV). An NPA 1 motif is present at residues 83–85 (NPA). The next 3 helical transmembrane spans lie at 97 to 119 (TILT…CLLL), 140 to 162 (IQGV…ATAA), and 172 to 194 (IAPI…FSGG). The NPA 2 signature appears at 197-199 (NPA). Residues 215–237 (WIYWAGPLIGGALAGFIYGDVFI) traverse the membrane as a helical segment.

The protein belongs to the MIP/aquaporin (TC 1.A.8) family. TIP (TC 1.A.8.10) subfamily. Expressed in mature seeds and dark-grown seedlings.

It is found in the vacuole membrane. Functionally, channel protein in tonoplast. These proteins may allow the diffusion of amino acids and/or peptides from the vacuolar compartment to the cytoplasm. This is Probable aquaporin TIP-type (DIP) from Antirrhinum majus (Garden snapdragon).